The following is a 107-amino-acid chain: Nucleoid-associated protein AZOSEA06390 (107 aa).

It belongs to the YbaB/EbfC family. In terms of assembly, homodimer.

It localises to the cytoplasm. The protein localises to the nucleoid. In terms of biological role, binds to DNA and alters its conformation. May be involved in regulation of gene expression, nucleoid organization and DNA protection. This Aromatoleum aromaticum (strain DSM 19018 / LMG 30748 / EbN1) (Azoarcus sp. (strain EbN1)) protein is Nucleoid-associated protein AZOSEA06390.